The primary structure comprises 132 residues: ATP synthase epsilon chain, chloroplastic (132 aa).

The protein belongs to the ATPase epsilon chain family. F-type ATPases have 2 components, CF(1) - the catalytic core - and CF(0) - the membrane proton channel. CF(1) has five subunits: alpha(3), beta(3), gamma(1), delta(1), epsilon(1). CF(0) has three main subunits: a, b and c.

It is found in the plastid. It localises to the chloroplast thylakoid membrane. In terms of biological role, produces ATP from ADP in the presence of a proton gradient across the membrane. The protein is ATP synthase epsilon chain, chloroplastic of Pylaiella littoralis (Seaweed).